The chain runs to 1265 residues: Topoisomerase 1-associated factor 1 (1265 aa).

A compositionally biased stretch (polar residues) spans 650-659 (DVNGNKNGQD). 3 disordered regions span residues 650 to 670 (DVNG…DAIS), 1019 to 1052 (GKQI…DDDT), and 1167 to 1226 (HLSL…DPPS). Positions 1026-1039 (TAKKRSAIKPKSRK) are enriched in basic residues. Composition is skewed to low complexity over residues 1171-1188 (SPNN…LSSD) and 1201-1211 (SDSEYNSSNSS).

It belongs to the timeless family. In terms of assembly, component of the fork protection complex (FPC) consisting of TOF1 and CSM3.

It is found in the nucleus. Functionally, forms a fork protection complex (FPC) with CSM3 and which is required for chromosome segregation during meiosis and DNA damage repair. FPC coordinates leading and lagging strand synthesis and moves with the replication fork. FPC stabilizes replication forks in a configuration that is recognized by replication checkpoint sensors. This is Topoisomerase 1-associated factor 1 (TOF1) from Eremothecium gossypii (strain ATCC 10895 / CBS 109.51 / FGSC 9923 / NRRL Y-1056) (Yeast).